The sequence spans 337 residues: MNATSVPPAEGSCPSNALITKQIIPMLYFVVFVAGILLNGMSGWVFFYVPSSKSFIVYLKNIVIADFLMSLTFPFKILGDLGLGLWQVKVFVCRVSAVLFYINMYVSIVFFGLIGFDRYYKIVKPLLTSFIQSISYSKLLSVLVWSLTLLIALPNMILTNRNVTEATRVKCMDLKSDLGLKWHKASSYIFVGIFWIVFLSLIIFYTAITKKIFKSHFKSRKNSVSVKKKSSRNIFSIMFVFFICFVPYHIARIPYTQSQTEAHYSCQSKQILFYVKEFSLLLSAANVCLDPIIYFFLCQPFREVLCKKLHIQLKTQHDSETSKIKRENIIQESTDTL.

The Extracellular segment spans residues 1 to 28 (MNATSVPPAEGSCPSNALITKQIIPMLY). N-linked (GlcNAc...) asparagine glycosylation occurs at Asn-2. The chain crosses the membrane as a helical span at residues 29–49 (FVVFVAGILLNGMSGWVFFYV). Residues 50 to 54 (PSSKS) are Cytoplasmic-facing. Residues 55–75 (FIVYLKNIVIADFLMSLTFPF) form a helical membrane-spanning segment. The Extracellular portion of the chain corresponds to 76–95 (KILGDLGLGLWQVKVFVCRV). A disulfide bond links Cys-93 and Cys-171. The helical transmembrane segment at 96-116 (SAVLFYINMYVSIVFFGLIGF) threads the bilayer. At 117-138 (DRYYKIVKPLLTSFIQSISYSK) the chain is on the cytoplasmic side. Residues 139 to 159 (LLSVLVWSLTLLIALPNMILT) form a helical membrane-spanning segment. The Extracellular segment spans residues 160–187 (NRNVTEATRVKCMDLKSDLGLKWHKASS). N-linked (GlcNAc...) asparagine glycosylation is present at Asn-162. The helical transmembrane segment at 188 to 208 (YIFVGIFWIVFLSLIIFYTAI) threads the bilayer. The Cytoplasmic segment spans residues 209–233 (TKKIFKSHFKSRKNSVSVKKKSSRN). The chain crosses the membrane as a helical span at residues 234–254 (IFSIMFVFFICFVPYHIARIP). Over 255 to 277 (YTQSQTEAHYSCQSKQILFYVKE) the chain is Extracellular. The chain crosses the membrane as a helical span at residues 278-298 (FSLLLSAANVCLDPIIYFFLC). Residues 299-337 (QPFREVLCKKLHIQLKTQHDSETSKIKRENIIQESTDTL) are Cytoplasmic-facing.

The protein belongs to the G-protein coupled receptor 1 family.

Its subcellular location is the cell membrane. In terms of biological role, receptor for UDP-glucose and other UDP-sugar coupled to G-proteins. Not activated by ATP, ADP, UTP or ATP. This chain is P2Y purinoceptor 14 (P2RY14), found in Bos taurus (Bovine).